The sequence spans 284 residues: Four and a half LIM domains protein 5 (284 aa).

The C4-type zinc finger occupies 8 to 32 (CQYCTSSLIGKKYVLKDDNLYCISC). LIM zinc-binding domains lie at 39–100 (NYCE…ECSS), 101–160 (KCFH…KEFA), and 161–220 (HYCN…LYAK).

As to quaternary structure, interacts with CREM (via the third LIM domain). Interacts (via second LIM domain) with SPAG8. Testis-specific, temporal expression is coordinated with CREM.

It is found in the nucleus. May be involved in the regulation of spermatogenesis. Stimulates CREM transcriptional activity in a phosphorylation-independent manner. The polypeptide is Four and a half LIM domains protein 5 (Fhl5) (Mus musculus (Mouse)).